The following is a 417-amino-acid chain: Tyrosine--tRNA ligase (417 aa).

Tyr-34 provides a ligand contact to L-tyrosine. The 'HIGH' region signature appears at 39–48 (PTAKSIHIGN). L-tyrosine is bound by residues Tyr-165 and Gln-169. Residues 227–231 (KFGKS) carry the 'KMSKS' region motif. Lys-230 is an ATP binding site. The 68-residue stretch at 349 to 416 (TDVVELLVKD…GKKKYFLAKV (68 aa)) folds into the S4 RNA-binding domain.

This sequence belongs to the class-I aminoacyl-tRNA synthetase family. TyrS type 1 subfamily. As to quaternary structure, homodimer.

The protein localises to the cytoplasm. The catalysed reaction is tRNA(Tyr) + L-tyrosine + ATP = L-tyrosyl-tRNA(Tyr) + AMP + diphosphate + H(+). In terms of biological role, catalyzes the attachment of tyrosine to tRNA(Tyr) in a two-step reaction: tyrosine is first activated by ATP to form Tyr-AMP and then transferred to the acceptor end of tRNA(Tyr). This chain is Tyrosine--tRNA ligase, found in Oenococcus oeni (strain ATCC BAA-331 / PSU-1).